The chain runs to 443 residues: Histidinol dehydrogenase (443 aa).

Positions 133, 191, and 214 each coordinate NAD(+). Substrate contacts are provided by serine 240, glutamine 262, and histidine 265. Zn(2+)-binding residues include glutamine 262 and histidine 265. Active-site proton acceptor residues include glutamate 329 and histidine 330. Residues histidine 330, aspartate 363, glutamate 417, and histidine 422 each coordinate substrate. Aspartate 363 serves as a coordination point for Zn(2+). Zn(2+) is bound at residue histidine 422.

It belongs to the histidinol dehydrogenase family. As to quaternary structure, homodimer. Zn(2+) is required as a cofactor.

It carries out the reaction L-histidinol + 2 NAD(+) + H2O = L-histidine + 2 NADH + 3 H(+). It functions in the pathway amino-acid biosynthesis; L-histidine biosynthesis; L-histidine from 5-phospho-alpha-D-ribose 1-diphosphate: step 9/9. Catalyzes the sequential NAD-dependent oxidations of L-histidinol to L-histidinaldehyde and then to L-histidine. The polypeptide is Histidinol dehydrogenase (Blochmanniella pennsylvanica (strain BPEN)).